A 478-amino-acid polypeptide reads, in one-letter code: tRNA(Ile)-lysidine synthase (478 aa).

27 to 32 (SGGSDS) provides a ligand contact to ATP.

The protein belongs to the tRNA(Ile)-lysidine synthase family.

It is found in the cytoplasm. It catalyses the reaction cytidine(34) in tRNA(Ile2) + L-lysine + ATP = lysidine(34) in tRNA(Ile2) + AMP + diphosphate + H(+). In terms of biological role, ligates lysine onto the cytidine present at position 34 of the AUA codon-specific tRNA(Ile) that contains the anticodon CAU, in an ATP-dependent manner. Cytidine is converted to lysidine, thus changing the amino acid specificity of the tRNA from methionine to isoleucine. The polypeptide is tRNA(Ile)-lysidine synthase (Rickettsia africae (strain ESF-5)).